Here is a 242-residue protein sequence, read N- to C-terminus: Uridylate kinase (242 aa).

17 to 20 (KLSG) provides a ligand contact to ATP. Gly59 contributes to the UMP binding site. The ATP site is built by Gly60 and Arg64. Residues Asp79 and 140–147 (TGNPFFTT) contribute to the UMP site. Residues Thr167, Tyr173, and Asp176 each contribute to the ATP site.

It belongs to the UMP kinase family. As to quaternary structure, homohexamer.

The protein resides in the cytoplasm. It carries out the reaction UMP + ATP = UDP + ADP. The protein operates within pyrimidine metabolism; CTP biosynthesis via de novo pathway; UDP from UMP (UMPK route): step 1/1. Inhibited by UTP. Catalyzes the reversible phosphorylation of UMP to UDP. The chain is Uridylate kinase from Marinobacter nauticus (strain ATCC 700491 / DSM 11845 / VT8) (Marinobacter aquaeolei).